Reading from the N-terminus, the 404-residue chain is Cysteine desulfurase IscS (404 aa).

Pyridoxal 5'-phosphate contacts are provided by residues 75–76 (AT), Asn155, Gln183, and 203–205 (SGH). The residue at position 206 (Lys206) is an N6-(pyridoxal phosphate)lysine. Thr243 contributes to the pyridoxal 5'-phosphate binding site. Catalysis depends on Cys328, which acts as the Cysteine persulfide intermediate. Residue Cys328 coordinates [2Fe-2S] cluster.

This sequence belongs to the class-V pyridoxal-phosphate-dependent aminotransferase family. NifS/IscS subfamily. As to quaternary structure, homodimer. Forms a heterotetramer with IscU, interacts with other sulfur acceptors. The cofactor is pyridoxal 5'-phosphate.

It is found in the cytoplasm. It carries out the reaction (sulfur carrier)-H + L-cysteine = (sulfur carrier)-SH + L-alanine. The protein operates within cofactor biosynthesis; iron-sulfur cluster biosynthesis. In terms of biological role, master enzyme that delivers sulfur to a number of partners involved in Fe-S cluster assembly, tRNA modification or cofactor biosynthesis. Catalyzes the removal of elemental sulfur and selenium atoms from cysteine and selenocysteine to produce alanine. Functions as a sulfur delivery protein for Fe-S cluster synthesis onto IscU, an Fe-S scaffold assembly protein, as well as other S acceptor proteins. Also functions as a selenium delivery protein in the pathway for the biosynthesis of selenophosphate. This Salmonella schwarzengrund (strain CVM19633) protein is Cysteine desulfurase IscS.